The following is a 257-amino-acid chain: Ribosomal RNA small subunit methyltransferase J (257 aa).

Residues 107 to 108, 123 to 124, and Asp-177 each bind S-adenosyl-L-methionine; these read RD and ER.

The protein belongs to the methyltransferase superfamily. RsmJ family.

Its subcellular location is the cytoplasm. The catalysed reaction is guanosine(1516) in 16S rRNA + S-adenosyl-L-methionine = N(2)-methylguanosine(1516) in 16S rRNA + S-adenosyl-L-homocysteine + H(+). Its function is as follows. Specifically methylates the guanosine in position 1516 of 16S rRNA. The sequence is that of Ribosomal RNA small subunit methyltransferase J from Haemophilus influenzae (strain 86-028NP).